We begin with the raw amino-acid sequence, 396 residues long: Anhydro-N-acetylmuramic acid kinase (396 aa).

21 to 28 contacts ATP; it reads GTSADGID.

It belongs to the anhydro-N-acetylmuramic acid kinase family.

It carries out the reaction 1,6-anhydro-N-acetyl-beta-muramate + ATP + H2O = N-acetyl-D-muramate 6-phosphate + ADP + H(+). Its pathway is amino-sugar metabolism; 1,6-anhydro-N-acetylmuramate degradation. It functions in the pathway cell wall biogenesis; peptidoglycan recycling. Catalyzes the specific phosphorylation of 1,6-anhydro-N-acetylmuramic acid (anhMurNAc) with the simultaneous cleavage of the 1,6-anhydro ring, generating MurNAc-6-P. Is required for the utilization of anhMurNAc either imported from the medium or derived from its own cell wall murein, and thus plays a role in cell wall recycling. The sequence is that of Anhydro-N-acetylmuramic acid kinase from Caldanaerobacter subterraneus subsp. tengcongensis (strain DSM 15242 / JCM 11007 / NBRC 100824 / MB4) (Thermoanaerobacter tengcongensis).